A 485-amino-acid chain; its full sequence is Apolipoprotein N-acyltransferase (485 aa).

6 helical membrane passes run 8–28 (IAGA…IAFV), 49–69 (GWLF…VSIH), 76–96 (VPLA…FIAF), 121–141 (WWVV…WLFL), 157–177 (FGIY…YLLV), and 186–206 (IMCL…TFIP). The region spanning 220–457 (VQGNIGQRLK…RLLLTGQIKP (238 aa)) is the CN hydrolase domain. Residue E259 is the Proton acceptor of the active site. The active site involves K317. C369 functions as the Nucleophile in the catalytic mechanism. Residues 464-484 (LMRWNYYPVVGIIIIFLLLTF) form a helical membrane-spanning segment.

It belongs to the CN hydrolase family. Apolipoprotein N-acyltransferase subfamily.

The protein localises to the cell inner membrane. It carries out the reaction N-terminal S-1,2-diacyl-sn-glyceryl-L-cysteinyl-[lipoprotein] + a glycerophospholipid = N-acyl-S-1,2-diacyl-sn-glyceryl-L-cysteinyl-[lipoprotein] + a 2-acyl-sn-glycero-3-phospholipid + H(+). The protein operates within protein modification; lipoprotein biosynthesis (N-acyl transfer). Its function is as follows. Catalyzes the phospholipid dependent N-acylation of the N-terminal cysteine of apolipoprotein, the last step in lipoprotein maturation. The chain is Apolipoprotein N-acyltransferase from Coxiella burnetii (strain RSA 493 / Nine Mile phase I).